A 494-amino-acid chain; its full sequence is GTPase Der (494 aa).

EngA-type G domains are found at residues 2 to 164 and 235 to 407; these read KKIA…PEED and IKIS…KNYS. Residues 8-15, 55-59, 116-119, 241-248, 288-292, and 352-355 contribute to the GTP site; these read GRPNVGKS, DTGGL, NKID, GRTNVGKS, DTAGL, and NKWD. One can recognise a KH-like domain in the interval 408-492; that stretch reads QHIKTSELNV…PVLFKAKKRG (85 aa).

It belongs to the TRAFAC class TrmE-Era-EngA-EngB-Septin-like GTPase superfamily. EngA (Der) GTPase family. As to quaternary structure, associates with the 50S ribosomal subunit.

Its function is as follows. GTPase that plays an essential role in the late steps of ribosome biogenesis. The polypeptide is GTPase Der (Sulfurimonas denitrificans (strain ATCC 33889 / DSM 1251) (Thiomicrospira denitrificans (strain ATCC 33889 / DSM 1251))).